A 263-amino-acid polypeptide reads, in one-letter code: Tetraspanin-7 (263 aa).

Residues 1–7 (MVQCSNN) are Cytoplasmic-facing. A helical transmembrane segment spans residues 8-28 (LLGILNFFTFLLSIPILSAGI). The Extracellular segment spans residues 29 to 45 (WLGKNAATECERFLDKP). The helical transmembrane segment at 46–66 (MVVLGIFLMFVSIAGLVGACC) threads the bilayer. At 67–75 (RVSCLLWLY) the chain is on the cytoplasmic side. Residues 76–96 (LFAMFLLILLGFCFTIFAFAV) form a helical membrane-spanning segment. Residues 97 to 234 (TNRGAGEVIS…NIKNSWKKVA (138 aa)) are Extracellular-facing. An N-linked (GlcNAc...) asparagine glycan is attached at Asn-180. A helical transmembrane segment spans residues 235–255 (KVNIVFLIFLIIVYSVGCCAF). The Cytoplasmic segment spans residues 256 to 263 (RNNRKRSW).

The protein belongs to the tetraspanin (TM4SF) family.

The protein localises to the membrane. Its function is as follows. May be involved in the regulation of cell differentiation. This Arabidopsis thaliana (Mouse-ear cress) protein is Tetraspanin-7 (TET7).